An 826-amino-acid chain; its full sequence is E3 ubiquitin-protein ligase SH3RF1 (826 aa).

The RING-type zinc-finger motif lies at 12–53 (CPVCLERLDASAKVLPCQHTFCKRCLLGIVSSRKELRCPECR). The disordered stretch occupies residues 80–130 (PRKAGDGGSAGNSTNALRAQGSVTTNGGLNDAQNTQSGQQRIQARSPPVRG). The span at 90-122 (GNSTNALRAQGSVTTNGGLNDAQNTQSGQQRIQ) shows a compositional bias: polar residues. SH3 domains follow at residues 132 to 191 (PQLP…IIKP) and 194 to 257 (QPPP…FNSA). Positions 266–319 (KPSGADTGEGSSGTSHSGNSQKQADAKKNTKKRHSFTSLTMSNKSSQSVQNRHS) are disordered. Residues 273–285 (GEGSSGTSHSGNS) show a composition bias toward low complexity. A compositionally biased stretch (polar residues) spans 301–317 (FTSLTMSNKSSQSVQNR). Residues 398-459 (ARPSVFIAIY…PGNYVAPVTR (62 aa)) enclose the SH3 3 domain. Disordered regions lie at residues 647–694 (NSAA…QTNS) and 725–759 (DSVSASTPAQDNRKPASLDNNIPIAPPPRQPCSSL). Residues 652 to 663 (KQDKDSKKEKKG) show a composition bias toward basic and acidic residues. An SH3 4 domain is found at 767-826 (RPCERYRVMVSYPPQSEAELELKEGDIVFVHKKREDGWFKGTLQRNGKTGLFPGSFVENI).

This sequence belongs to the SH3RF family. In terms of processing, autoubiquitinated. Ubiquitinated by SH3RF2, leading to proteasome-mediated degradation.

The protein resides in the cytoplasm. It localises to the perinuclear region. The protein localises to the cell projection. Its subcellular location is the lamellipodium. It is found in the golgi apparatus. The protein resides in the trans-Golgi network. The catalysed reaction is S-ubiquitinyl-[E2 ubiquitin-conjugating enzyme]-L-cysteine + [acceptor protein]-L-lysine = [E2 ubiquitin-conjugating enzyme]-L-cysteine + N(6)-ubiquitinyl-[acceptor protein]-L-lysine.. Its pathway is protein modification; protein ubiquitination. In terms of biological role, has E3 ubiquitin-protein ligase activity. In the absence of an external substrate, it can catalyze self-ubiquitination. Acts as a scaffold protein that contributes to the effective activation of the JNK signaling pathway. Plays an essential role in the anterior neural development. The chain is E3 ubiquitin-protein ligase SH3RF1 (sh3rf1) from Xenopus laevis (African clawed frog).